Reading from the N-terminus, the 345-residue chain is NADH-ubiquinone oxidoreductase chain 2 (345 aa).

10 helical membrane-spanning segments follow: residues 1 to 21 (MNPI…VITM), 25 to 45 (NLML…PMLI), 56 to 76 (ATKY…AIVL), 92 to 114 (GLIL…FHFW), 149 to 171 (LNST…GGLN), 178 to 198 (IMAY…PYNP), 200 to 220 (LTLL…MALM), 241 to 261 (LTMI…TGFL), 274 to 294 (NCLI…FFYT), and 324 to 344 (LMFS…PQLI).

Belongs to the complex I subunit 2 family. Core subunit of respiratory chain NADH dehydrogenase (Complex I) which is composed of 45 different subunits. Interacts with TMEM242.

It is found in the mitochondrion inner membrane. The enzyme catalyses a ubiquinone + NADH + 5 H(+)(in) = a ubiquinol + NAD(+) + 4 H(+)(out). Functionally, core subunit of the mitochondrial membrane respiratory chain NADH dehydrogenase (Complex I) which catalyzes electron transfer from NADH through the respiratory chain, using ubiquinone as an electron acceptor. Essential for the catalytic activity and assembly of complex I. The polypeptide is NADH-ubiquinone oxidoreductase chain 2 (Mus musculus (Mouse)).